The chain runs to 592 residues: Glutamine--fructose-6-phosphate aminotransferase [isomerizing] (592 aa).

Catalysis depends on Cys2, which acts as the Nucleophile; for GATase activity. Residues 2 to 217 (CGIVGYVGRD…DGEIADLTPD (216 aa)) form the Glutamine amidotransferase type-2 domain. SIS domains lie at 277 to 416 (IPFK…EREN) and 441 to 582 (VAEK…VDQP). Catalysis depends on Lys587, which acts as the For Fru-6P isomerization activity.

As to quaternary structure, homodimer.

It is found in the cytoplasm. The catalysed reaction is D-fructose 6-phosphate + L-glutamine = D-glucosamine 6-phosphate + L-glutamate. Its function is as follows. Catalyzes the first step in hexosamine metabolism, converting fructose-6P into glucosamine-6P using glutamine as a nitrogen source. This chain is Glutamine--fructose-6-phosphate aminotransferase [isomerizing], found in Aquifex aeolicus (strain VF5).